The primary structure comprises 342 residues: Ribosomal RNA small subunit methyltransferase C (342 aa).

This sequence belongs to the methyltransferase superfamily. RsmC family. In terms of assembly, monomer.

The protein localises to the cytoplasm. The enzyme catalyses guanosine(1207) in 16S rRNA + S-adenosyl-L-methionine = N(2)-methylguanosine(1207) in 16S rRNA + S-adenosyl-L-homocysteine + H(+). Functionally, specifically methylates the guanine in position 1207 of 16S rRNA in the 30S particle. The protein is Ribosomal RNA small subunit methyltransferase C of Erwinia tasmaniensis (strain DSM 17950 / CFBP 7177 / CIP 109463 / NCPPB 4357 / Et1/99).